A 177-amino-acid polypeptide reads, in one-letter code: Large ribosomal subunit protein uL6 (177 aa).

Belongs to the universal ribosomal protein uL6 family. In terms of assembly, part of the 50S ribosomal subunit.

This protein binds to the 23S rRNA, and is important in its secondary structure. It is located near the subunit interface in the base of the L7/L12 stalk, and near the tRNA binding site of the peptidyltransferase center. In Teredinibacter turnerae (strain ATCC 39867 / T7901), this protein is Large ribosomal subunit protein uL6.